A 209-amino-acid polypeptide reads, in one-letter code: Small ribosomal subunit protein uS3c (209 aa).

In terms of domain architecture, KH type-2 spans 39 to 109 (IRSCIEKQLH…QIRINLIEIT (71 aa)).

The protein belongs to the universal ribosomal protein uS3 family. In terms of assembly, part of the 30S ribosomal subunit.

Its subcellular location is the plastid. The protein resides in the chloroplast. This is Small ribosomal subunit protein uS3c (rps3) from Gracilaria tenuistipitata (Red alga).